The chain runs to 539 residues: Keratin, type II cytoskeletal 73 (539 aa).

A head region spans residues 1-130; it reads MNRQFTCKPG…DPEIQKVRAQ (130 aa). The segment at 131–166 is coil 1A; sequence EREQIKALNNKFASFIDKVRFLEQQNQVLQTKWELL. Positions 131-444 constitute an IF rod domain; sequence EREQIKALNN…KLLEGEECRM (314 aa). The tract at residues 167-185 is linker 1; that stretch reads QQLDLSNCRRNLEPVYEAH. Positions 186-277 are coil 1B; the sequence is ISSLQKQLDS…CLYEGEITQM (92 aa). A linker 12 region spans residues 278–301; that stretch reads QSHISDTSVVLSMDNNRNLDLDSI. The segment at 302–440 is coil 2; that stretch reads IAEVRAQYED…ATYRKLLEGE (139 aa). Positions 441–539 are tail; the sequence is ECRMSGEHTS…LGSPSKKTMR (99 aa).

The protein belongs to the intermediate filament family. Heterotetramer of two type I and two type II keratins.

Has a role in hair formation. Specific component of keratin intermediate filaments in the inner root sheath (IRS) of the hair follicle. The sequence is that of Keratin, type II cytoskeletal 73 (Krt73) from Mus musculus (Mouse).